The sequence spans 122 residues: Large ribosomal subunit protein uL14 (122 aa).

It belongs to the universal ribosomal protein uL14 family. As to quaternary structure, part of the 50S ribosomal subunit. Forms a cluster with proteins L3 and L19. In the 70S ribosome, L14 and L19 interact and together make contacts with the 16S rRNA in bridges B5 and B8.

Binds to 23S rRNA. Forms part of two intersubunit bridges in the 70S ribosome. The protein is Large ribosomal subunit protein uL14 of Marinobacter nauticus (strain ATCC 700491 / DSM 11845 / VT8) (Marinobacter aquaeolei).